The chain runs to 435 residues: Glutamyl-tRNA(Gln) amidotransferase subunit D (435 aa).

One can recognise an Asparaginase/glutaminase domain in the interval 91-419 (PDVSIISTGG…EMAREMMREN (329 aa)). Active-site residues include Thr101, Thr177, Asp178, and Lys254.

It belongs to the asparaginase 1 family. GatD subfamily. Heterodimer of GatD and GatE.

It catalyses the reaction L-glutamyl-tRNA(Gln) + L-glutamine + ATP + H2O = L-glutaminyl-tRNA(Gln) + L-glutamate + ADP + phosphate + H(+). Its function is as follows. Allows the formation of correctly charged Gln-tRNA(Gln) through the transamidation of misacylated Glu-tRNA(Gln) in organisms which lack glutaminyl-tRNA synthetase. The reaction takes place in the presence of glutamine and ATP through an activated gamma-phospho-Glu-tRNA(Gln). The GatDE system is specific for glutamate and does not act on aspartate. This chain is Glutamyl-tRNA(Gln) amidotransferase subunit D (gatD), found in Methanothermobacter thermautotrophicus (strain ATCC 29096 / DSM 1053 / JCM 10044 / NBRC 100330 / Delta H) (Methanobacterium thermoautotrophicum).